The chain runs to 154 residues: Protein X (154 aa).

Positions 68–117 are mitochondrial targeting sequence; it reads PCALRFTSARRMETTVNAHQILPKVLHKRTLGLPAMSTTDLEAYFKDCVF.

Belongs to the orthohepadnavirus protein X family. In terms of assembly, may form homodimer. May interact with host CEBPA, CFLAR, CREB1, DDB1, E4F1, HBXIP, HSPD1/HSP60, NFKBIA, POLR2E and SMAD4. Interacts with host SMC5-SMC6 complex and induces its degradation. Interacts with host TRPC4AP; leading to prevent ubiquitination of TRPC4AP. Interacts with host PLSCR1; this interaction promotes ubiquitination and degradation of HBx and impairs HBx-mediated cell proliferation. Post-translationally, a fraction may be phosphorylated in insect cells and HepG2 cells, a human hepatoblastoma cell line. Phosphorylated in vitro by host protein kinase C or mitogen-activated protein kinase. N-acetylated in insect cells.

The protein resides in the host cytoplasm. The protein localises to the host nucleus. It is found in the host mitochondrion. Functionally, multifunctional protein that plays a role in silencing host antiviral defenses and promoting viral transcription. Does not seem to be essential for HBV infection. May be directly involved in development of cirrhosis and liver cancer (hepatocellular carcinoma). Most of cytosolic activities involve modulation of cytosolic calcium. The effect on apoptosis is controversial depending on the cell types in which the studies have been conducted. May induce apoptosis by localizing in mitochondria and causing loss of mitochondrial membrane potential. May also modulate apoptosis by binding host CFLAR, a key regulator of the death-inducing signaling complex (DISC). Promotes viral transcription by using the host E3 ubiquitin ligase DDB1 to target the SMC5-SMC6 complex to proteasomal degradation. This host complex would otherwise bind to viral episomal DNA, and prevents its transcription. Moderately stimulates transcription of many different viral and cellular transcription elements. Promoters and enhancers stimulated by HBx contain DNA binding sites for NF-kappa-B, AP-1, AP-2, c-EBP, ATF/CREB, or the calcium-activated factor NF-AT. This chain is Protein X, found in Homo sapiens (Human).